We begin with the raw amino-acid sequence, 201 residues long: LexA repressor (201 aa).

Residues 29-49 (VREICKAVGLSSTSSVHFHLK) constitute a DNA-binding region (H-T-H motif). Active-site for autocatalytic cleavage activity residues include serine 125 and lysine 162.

Belongs to the peptidase S24 family. Homodimer.

It catalyses the reaction Hydrolysis of Ala-|-Gly bond in repressor LexA.. Its function is as follows. Represses a number of genes involved in the response to DNA damage (SOS response), including recA and lexA. In the presence of single-stranded DNA, RecA interacts with LexA causing an autocatalytic cleavage which disrupts the DNA-binding part of LexA, leading to derepression of the SOS regulon and eventually DNA repair. This is LexA repressor from Clostridium botulinum (strain 657 / Type Ba4).